The chain runs to 75 residues: Small ribosomal subunit protein bS18 (75 aa).

It belongs to the bacterial ribosomal protein bS18 family. In terms of assembly, part of the 30S ribosomal subunit. Forms a tight heterodimer with protein bS6.

In terms of biological role, binds as a heterodimer with protein bS6 to the central domain of the 16S rRNA, where it helps stabilize the platform of the 30S subunit. The chain is Small ribosomal subunit protein bS18 from Cereibacter sphaeroides (strain KD131 / KCTC 12085) (Rhodobacter sphaeroides).